We begin with the raw amino-acid sequence, 57 residues long: Protein translocase subunit SecE (57 aa).

The helical transmembrane segment at 34–54 (AGILLIGAIGFLVFLIMGGIV) threads the bilayer.

Belongs to the SecE/SEC61-gamma family. Component of the Sec protein translocase complex. Heterotrimer consisting of SecY (alpha), SecG (beta) and SecE (gamma) subunits. The heterotrimers can form oligomers, although 1 heterotrimer is thought to be able to translocate proteins. Interacts with the ribosome. May interact with SecDF, and other proteins may be involved.

The protein resides in the cell membrane. Essential subunit of the Sec protein translocation channel SecYEG. Clamps together the 2 halves of SecY. May contact the channel plug during translocation. This is Protein translocase subunit SecE from Halobacterium salinarum (strain ATCC 29341 / DSM 671 / R1).